The sequence spans 517 residues: Putative lipase ATG15 (517 aa).

Residues 1–6 (MRASTH) are Cytoplasmic-facing. A helical; Signal-anchor for type II membrane protein transmembrane segment spans residues 7 to 27 (SWLLLVVVLSLSSFTVNAVIL). Topologically, residues 28 to 517 (EGLIPPRSHL…TNWHFTDETL (490 aa)) are lumenal. Residues Asn187, Asn221, and Asn303 are each glycosylated (N-linked (GlcNAc...) asparagine). Ser319 functions as the Charge relay system in the catalytic mechanism. The disordered stretch occupies residues 466–499 (GWRWPWHRGDSADDDGDSDEDTDEDDKLAVPKAR). The span at 477 to 491 (ADDDGDSDEDTDEDD) shows a compositional bias: acidic residues.

This sequence belongs to the AB hydrolase superfamily. Lipase family. In terms of assembly, binds to both phosphatidylinositol (PI) and phosphatidylinositol 3,5-bisphosphate (PIP2).

Its subcellular location is the endosome. It is found in the multivesicular body membrane. The protein localises to the prevacuolar compartment membrane. The enzyme catalyses a triacylglycerol + H2O = a diacylglycerol + a fatty acid + H(+). Functionally, lipase which is essential for lysis of subvacuolar cytoplasm to vacuole targeted bodies and intravacuolar autophagic bodies. Involved in the lysis of intravacuolar multivesicular body (MVB) vesicles. The intravacuolar membrane disintegration by ATG15 is critical to life span extension. This is Putative lipase ATG15 (ATG15) from Mycosarcoma maydis (Corn smut fungus).